The sequence spans 473 residues: UDP-N-acetylmuramate--L-alanine ligase (473 aa).

ATP is bound at residue 115–121 (GTHGKTT).

The protein belongs to the MurCDEF family.

It is found in the cytoplasm. The catalysed reaction is UDP-N-acetyl-alpha-D-muramate + L-alanine + ATP = UDP-N-acetyl-alpha-D-muramoyl-L-alanine + ADP + phosphate + H(+). The protein operates within cell wall biogenesis; peptidoglycan biosynthesis. In terms of biological role, cell wall formation. This chain is UDP-N-acetylmuramate--L-alanine ligase, found in Rhizorhabdus wittichii (strain DSM 6014 / CCUG 31198 / JCM 15750 / NBRC 105917 / EY 4224 / RW1) (Sphingomonas wittichii).